A 189-amino-acid chain; its full sequence is Tetratricopeptide repeat protein 36 (189 aa).

3 TPR repeats span residues 51-84, 86-118, and 123-156; these read SKAL…LPER, SAYN…SGGR, and RQSF…GSPF.

This sequence belongs to the TTC36 family.

In Homo sapiens (Human), this protein is Tetratricopeptide repeat protein 36 (TTC36).